The primary structure comprises 736 residues: MTNSLIQPKGSVSKETNIQSIARITGSKIEEVKYLEDGLDIAGLKFVYDSSTETIWKLNGNETGMVDSWNIVDESTIIIVTNISSYQINILEQIILSNDDAAGKIGTSNGLSVQKNLDNISNNITLDTGGVLKDALKFITPEMFVINNEKYIHGTTLDAVPYLQAAIDYGKTNNLPVVLSQRYPCITFPQTYELPRDDGTVYPGWITAGTDQNIDPEPIYTMRAAIRLYNDSVIIGTNMQTTGIRGNWSKTSGPYDLNGTIGVFISGDSGKDGYVRYHMHDLNISGFMIGRLCEGISAFSTEDNLQISSCGITGIFQGEDAVERGFIKLWYNIAGDVFGGQWLTRNYAYASTYLPPYPASDIYRAGWNDSSFTEKYHYYGDTSLNFTHTAYSSLDNFFNTYFFKTANSITTANGGRLSNNKQTGVWPLGEYKGITGRAKTVYSRYGREILNCNILEAKIMWSPRTPFYHTSQSGSWVGNSKIGNVILERVGIINYAAGNTTGNRFNVDNVDPWDPSQNFFPAMVCRGNIGCMDVTRSGHVQQSVSNEINPIVTGGQIHRQYRRSDDTSSYSMLTLQEFKNSWVSKYVFNSSYAFVQPLVFTSSNAQFKYDYGTFTPVLQIAGSYITLTEATGIYHRFGDIIRIHIRLRNSNLTINTAGPFRISGLPFISSSIQTGYTKGSVFTPQATGVTLIPLVTPSTDVLTILKDSAGTSFSHPAGTFDFSFHADFDYVISFNS.

It localises to the virion. Functionally, functions as a receptor binding protein (RBP) and probably mediates the attachment to the host capsular exopolysaccharides. Displays a depolymerase activity that specifically degrades the KN4-type polysaccharides of Klebsiella pneumoniae capsule. This chain is Depolymerase, capsule KN4-specific, found in Klebsiella phage K64-1 (Bacteriophage K64-1).